The following is a 98-amino-acid chain: NADH-ubiquinone oxidoreductase chain 4L (98 aa).

Helical transmembrane passes span 1 to 21 (MSLI…GLLM), 29 to 49 (SLLC…MMVL), and 61 to 81 (IILL…LVMI).

This sequence belongs to the complex I subunit 4L family. As to quaternary structure, core subunit of respiratory chain NADH dehydrogenase (Complex I) which is composed of 45 different subunits.

It is found in the mitochondrion inner membrane. It catalyses the reaction a ubiquinone + NADH + 5 H(+)(in) = a ubiquinol + NAD(+) + 4 H(+)(out). Its function is as follows. Core subunit of the mitochondrial membrane respiratory chain NADH dehydrogenase (Complex I) which catalyzes electron transfer from NADH through the respiratory chain, using ubiquinone as an electron acceptor. Part of the enzyme membrane arm which is embedded in the lipid bilayer and involved in proton translocation. The polypeptide is NADH-ubiquinone oxidoreductase chain 4L (MT-ND4L) (Rhinoceros unicornis (Greater Indian rhinoceros)).